The chain runs to 91 residues: HssA/B-like protein 24 (91 aa).

Belongs to the hssA/B family.

This Dictyostelium discoideum (Social amoeba) protein is HssA/B-like protein 24 (hssl24).